A 514-amino-acid polypeptide reads, in one-letter code: Histidine ammonia-lyase (514 aa).

Positions Ala144 to Gly146 form a cross-link, 5-imidazolinone (Ala-Gly). The residue at position 145 (Ser145) is a 2,3-didehydroalanine (Ser).

It belongs to the PAL/histidase family. Post-translationally, contains an active site 4-methylidene-imidazol-5-one (MIO), which is formed autocatalytically by cyclization and dehydration of residues Ala-Ser-Gly.

It is found in the cytoplasm. The catalysed reaction is L-histidine = trans-urocanate + NH4(+). Its pathway is amino-acid degradation; L-histidine degradation into L-glutamate; N-formimidoyl-L-glutamate from L-histidine: step 1/3. The polypeptide is Histidine ammonia-lyase (Rhodospirillum rubrum (strain ATCC 11170 / ATH 1.1.1 / DSM 467 / LMG 4362 / NCIMB 8255 / S1)).